The following is a 453-amino-acid chain: Bifunctional protein GlmU (453 aa).

The interval 1-225 is pyrophosphorylase; that stretch reads MHAHVILAAG…AEEALGVNTR (225 aa). Residues 7-10, Lys21, Gln72, and 77-78 contribute to the UDP-N-acetyl-alpha-D-glucosamine site; these read LAAG and GT. Asp102 contacts Mg(2+). The UDP-N-acetyl-alpha-D-glucosamine site is built by Gly138, Glu152, Asn167, and Asn223. Position 223 (Asn223) interacts with Mg(2+). Residues 226–246 form a linker region; the sequence is EELARVEGVLLRRLRAEWMGK. An N-acetyltransferase region spans residues 247 to 453; sequence GVRMILPETI…GYALRKLGEG (207 aa). UDP-N-acetyl-alpha-D-glucosamine is bound by residues Arg329 and Lys347. His359 acts as the Proton acceptor in catalysis. Tyr362 and Asn373 together coordinate UDP-N-acetyl-alpha-D-glucosamine. Acetyl-CoA is bound by residues Ala376, 382-383, Ser401, Ala419, and Arg436; that span reads NY.

It in the N-terminal section; belongs to the N-acetylglucosamine-1-phosphate uridyltransferase family. This sequence in the C-terminal section; belongs to the transferase hexapeptide repeat family. In terms of assembly, homotrimer. The cofactor is Mg(2+).

It is found in the cytoplasm. It catalyses the reaction alpha-D-glucosamine 1-phosphate + acetyl-CoA = N-acetyl-alpha-D-glucosamine 1-phosphate + CoA + H(+). It carries out the reaction N-acetyl-alpha-D-glucosamine 1-phosphate + UTP + H(+) = UDP-N-acetyl-alpha-D-glucosamine + diphosphate. The protein operates within nucleotide-sugar biosynthesis; UDP-N-acetyl-alpha-D-glucosamine biosynthesis; N-acetyl-alpha-D-glucosamine 1-phosphate from alpha-D-glucosamine 6-phosphate (route II): step 2/2. It participates in nucleotide-sugar biosynthesis; UDP-N-acetyl-alpha-D-glucosamine biosynthesis; UDP-N-acetyl-alpha-D-glucosamine from N-acetyl-alpha-D-glucosamine 1-phosphate: step 1/1. It functions in the pathway bacterial outer membrane biogenesis; LPS lipid A biosynthesis. In terms of biological role, catalyzes the last two sequential reactions in the de novo biosynthetic pathway for UDP-N-acetylglucosamine (UDP-GlcNAc). The C-terminal domain catalyzes the transfer of acetyl group from acetyl coenzyme A to glucosamine-1-phosphate (GlcN-1-P) to produce N-acetylglucosamine-1-phosphate (GlcNAc-1-P), which is converted into UDP-GlcNAc by the transfer of uridine 5-monophosphate (from uridine 5-triphosphate), a reaction catalyzed by the N-terminal domain. The sequence is that of Bifunctional protein GlmU from Thermus thermophilus (strain ATCC BAA-163 / DSM 7039 / HB27).